We begin with the raw amino-acid sequence, 408 residues long: NADH-quinone oxidoreductase subunit D (408 aa).

Belongs to the complex I 49 kDa subunit family. NDH-1 is composed of 14 different subunits. Subunits NuoB, C, D, E, F, and G constitute the peripheral sector of the complex.

It is found in the cell inner membrane. The enzyme catalyses a quinone + NADH + 5 H(+)(in) = a quinol + NAD(+) + 4 H(+)(out). NDH-1 shuttles electrons from NADH, via FMN and iron-sulfur (Fe-S) centers, to quinones in the respiratory chain. The immediate electron acceptor for the enzyme in this species is believed to be ubiquinone. Couples the redox reaction to proton translocation (for every two electrons transferred, four hydrogen ions are translocated across the cytoplasmic membrane), and thus conserves the redox energy in a proton gradient. The protein is NADH-quinone oxidoreductase subunit D of Campylobacter hominis (strain ATCC BAA-381 / DSM 21671 / CCUG 45161 / LMG 19568 / NCTC 13146 / CH001A).